A 254-amino-acid chain; its full sequence is ATP synthase subunit a (254 aa).

A propeptide spans 1-6 (removed in mature form); that stretch reads MAFLIH. Transmembrane regions (helical) follow at residues 32–52, 83–103, 119–139, 146–166, 182–202, 207–227, and 228–248; these read LTNL…LHIM, IGAA…FILI, SIMV…ILGL, FFSF…LVPI, LFAN…FLAP, TFII…IIGL, and EIAV…SYLK.

The protein belongs to the ATPase A chain family. As to quaternary structure, F-type ATPases have 2 components, CF(1) - the catalytic core - and CF(0) - the membrane proton channel. CF(1) has five subunits: alpha(3), beta(3), gamma(1), delta(1), epsilon(1). CF(0) has three main subunits: a, b and c.

The protein localises to the mitochondrion inner membrane. Its function is as follows. Mitochondrial membrane ATP synthase (F(1)F(0) ATP synthase or Complex V) produces ATP from ADP in the presence of a proton gradient across the membrane which is generated by electron transport complexes of the respiratory chain. F-type ATPases consist of two structural domains, F(1) - containing the extramembraneous catalytic core and F(0) - containing the membrane proton channel, linked together by a central stalk and a peripheral stalk. During catalysis, ATP synthesis in the catalytic domain of F(1) is coupled via a rotary mechanism of the central stalk subunits to proton translocation. Key component of the proton channel; it may play a direct role in the translocation of protons across the membrane. This Mycosarcoma maydis (Corn smut fungus) protein is ATP synthase subunit a (ATP6).